The primary structure comprises 1080 residues: ATP-dependent helicase/deoxyribonuclease subunit B (1080 aa).

The protein belongs to the helicase family. AddB/RexB type 2 subfamily. As to quaternary structure, heterodimer of AddA and RexB. It depends on Mg(2+) as a cofactor.

In terms of biological role, the heterodimer acts as both an ATP-dependent DNA helicase and an ATP-dependent, dual-direction single-stranded exonuclease. Recognizes the chi site generating a DNA molecule suitable for the initiation of homologous recombination. This subunit has 5' -&gt; 3' nuclease activity but not helicase activity. This is ATP-dependent helicase/deoxyribonuclease subunit B from Streptococcus mutans serotype c (strain ATCC 700610 / UA159).